The primary structure comprises 273 residues: WIMGHMVNAIGQIDEFVNLGANSIETDVSFDDSANPQYTYHGVPCDCGRSCLKWENYNDFLKGLRSATTPGNSKYQSKLVLVVFDLKTGSLYDNQANEAGKKLAKNLLQHYWNNGNNGGRAYIVLSIPDLNHYPLIKGFTDTLTQEGHPELLEKVGYDFSGNDAIGDVANAYKKAGVTGHVWQSDGITNCLLRGLTRVREAVANRDSGKGYINKVYYWTVDKRASTRDALDAGVDGVMTNYPDVITDVMNEAAYKNKFRLATYEDNPWETFKK.

His-5 is a catalytic residue. Mg(2+) is bound by residues Glu-25 and Asp-27. Residue His-41 is the Nucleophile of the active site. 2 disulfides stabilise this stretch: Cys-45-Cys-51 and Cys-47-Cys-190. Asp-85 serves as a coordination point for Mg(2+).

Belongs to the arthropod phospholipase D family. Class II subfamily. Mg(2+) is required as a cofactor. Expressed by the venom gland.

Its subcellular location is the secreted. It catalyses the reaction an N-(acyl)-sphingosylphosphocholine = an N-(acyl)-sphingosyl-1,3-cyclic phosphate + choline. The catalysed reaction is an N-(acyl)-sphingosylphosphoethanolamine = an N-(acyl)-sphingosyl-1,3-cyclic phosphate + ethanolamine. It carries out the reaction a 1-acyl-sn-glycero-3-phosphocholine = a 1-acyl-sn-glycero-2,3-cyclic phosphate + choline. The enzyme catalyses a 1-acyl-sn-glycero-3-phosphoethanolamine = a 1-acyl-sn-glycero-2,3-cyclic phosphate + ethanolamine. Dermonecrotic toxins cleave the phosphodiester linkage between the phosphate and headgroup of certain phospholipids (sphingolipid and lysolipid substrates), forming an alcohol (often choline) and a cyclic phosphate. This toxin acts on sphingomyelin (SM). It may also act on ceramide phosphoethanolamine (CPE), lysophosphatidylcholine (LPC) and lysophosphatidylethanolamine (LPE), but not on lysophosphatidylserine (LPS), and lysophosphatidylglycerol (LPG). It acts by transphosphatidylation, releasing exclusively cyclic phosphate products as second products. Induces dermonecrosis, hemolysis, increased vascular permeability, edema, inflammatory response, and platelet aggregation. This Loxosceles spadicea (Recluse spider) protein is Dermonecrotic toxin LspaSicTox-alphaIA2i.